The chain runs to 447 residues: C4-dicarboxylate transport protein (447 aa).

Transmembrane regions (helical) follow at residues S13–P33, L49–M69, L81–V101, A149–L169, V189–M209, L227–A247, G302–A322, T336–F356, and I357–I377. The interval E422–R447 is disordered. A compositionally biased stretch (acidic residues) spans A425–E436.

It belongs to the dicarboxylate/amino acid:cation symporter (DAACS) (TC 2.A.23) family.

Its subcellular location is the cell inner membrane. Responsible for the transport of dicarboxylates such as succinate, fumarate, and malate from the periplasm across the membrane. This chain is C4-dicarboxylate transport protein, found in Leptothrix cholodnii (strain ATCC 51168 / LMG 8142 / SP-6) (Leptothrix discophora (strain SP-6)).